A 99-amino-acid polypeptide reads, in one-letter code: Putative septation protein SpoVG (99 aa).

Belongs to the SpoVG family.

Could be involved in septation. The polypeptide is Putative septation protein SpoVG (Aster yellows witches'-broom phytoplasma (strain AYWB)).